The chain runs to 1025 residues: Leucyl-cystinyl aminopeptidase (1025 aa).

At Met-1 the chain carries N-acetylmethionine. Topologically, residues 1-109 (MESFTNDRLQ…DGTCSLPSAR (109 aa)) are cytoplasmic. The Dileucine internalization motif motif lies at 53–54 (LL). Tyr-70 bears the Phosphotyrosine mark. Residues 76–77 (LL) carry the Dileucine internalization motif motif. Phosphoserine is present on residues Ser-80 and Ser-91. The tract at residues 96–101 (RQSPDG) is tankyrase binding. The helical; Signal-anchor for type II membrane protein transmembrane segment at 110–131 (TLVICVFVIVVAVSVIMVIYLL) threads the bilayer. The Extracellular segment spans residues 132 to 1025 (PRCTFTKEGC…RNLKTLSQWL (894 aa)). N-linked (GlcNAc...) asparagine glycans are attached at residues Asn-145, Asn-184, Asn-215, Asn-256, and Asn-266. Substrate is bound at residue Glu-295. 2 N-linked (GlcNAc...) asparagine glycosylation sites follow: Asn-368 and Asn-374. 428-432 (GAMEN) is a substrate binding site. A glycan (N-linked (GlcNAc...) asparagine) is linked at Asn-447. His-464 provides a ligand contact to Zn(2+). Glu-465 (proton acceptor) is an active-site residue. Residues His-468 and Glu-487 each contribute to the Zn(2+) site. Residues Asn-525, Asn-578, Asn-664, Asn-682, Asn-695, Asn-758, Asn-834, Asn-850, and Asn-989 are each glycosylated (N-linked (GlcNAc...) asparagine).

This sequence belongs to the peptidase M1 family. In terms of assembly, homodimer. Binds tankyrases 1 and 2. Zn(2+) serves as cofactor.

The protein localises to the cell membrane. The protein resides in the endomembrane system. It carries out the reaction Release of an N-terminal amino acid, Cys-|-Xaa-, in which the half-cystine residue is involved in a disulfide loop, notably in oxytocin or vasopressin. Hydrolysis rates on a range of aminoacyl arylamides exceed that for the cystinyl derivative, however.. Functionally, release of an N-terminal amino acid, cleave before cysteine, leucine as well as other amino acids. Degrades peptide hormones such as oxytocin, vasopressin and angiotensin III, and plays a role in maintaining homeostasis during pregnancy. May be involved in the inactivation of neuronal peptides in the brain. Cleaves Met-enkephalin and dynorphin. Binds angiotensin IV and may be the angiotensin IV receptor in the brain. This chain is Leucyl-cystinyl aminopeptidase (Lnpep), found in Mus musculus (Mouse).